The following is a 160-amino-acid chain: Transcriptional repressor NrdR (160 aa).

A zinc finger spans residues 3-34 (CPYCQYEDTQVKDSRPVEEGAVIRRRRVCPVC). The 91-residue stretch at 49–139 (LLVSKKSGRC…VYRDFRNASD (91 aa)) folds into the ATP-cone domain.

The protein belongs to the NrdR family. Zn(2+) serves as cofactor.

Functionally, negatively regulates transcription of bacterial ribonucleotide reductase nrd genes and operons by binding to NrdR-boxes. The chain is Transcriptional repressor NrdR from Bartonella quintana (strain Toulouse) (Rochalimaea quintana).